We begin with the raw amino-acid sequence, 25 residues long: Granule-bound starch synthase 1, chloroplastic/amyloplastic (25 aa).

Position 16 (Lys-16) interacts with ADP-alpha-D-glucose.

It belongs to the glycosyltransferase 1 family. Bacterial/plant glycogen synthase subfamily. Expressed in endosperm.

The protein localises to the plastid. It is found in the chloroplast. The protein resides in the amyloplast. It carries out the reaction an NDP-alpha-D-glucose + [(1-&gt;4)-alpha-D-glucosyl](n) = [(1-&gt;4)-alpha-D-glucosyl](n+1) + a ribonucleoside 5'-diphosphate + H(+). Its pathway is glycan biosynthesis; starch biosynthesis. In terms of biological role, required for the synthesis of amylose in endosperm. The polypeptide is Granule-bound starch synthase 1, chloroplastic/amyloplastic (Fagopyrum esculentum (Common buckwheat)).